The primary structure comprises 121 residues: Large ribosomal subunit protein bL20 (121 aa).

This sequence belongs to the bacterial ribosomal protein bL20 family.

Functionally, binds directly to 23S ribosomal RNA and is necessary for the in vitro assembly process of the 50S ribosomal subunit. It is not involved in the protein synthesizing functions of that subunit. The chain is Large ribosomal subunit protein bL20 from Persephonella marina (strain DSM 14350 / EX-H1).